The chain runs to 71 residues: Small ribosomal subunit protein bS21 (71 aa).

Positions 37-71 (HYEKPTAERKRKKAAAVKRHMKKLSRDNARRVKLY) are disordered. A compositionally biased stretch (basic residues) spans 45–59 (RKRKKAAAVKRHMKK). Residues 60–71 (LSRDNARRVKLY) show a composition bias toward basic and acidic residues.

Belongs to the bacterial ribosomal protein bS21 family.

This chain is Small ribosomal subunit protein bS21, found in Pseudoalteromonas translucida (strain TAC 125).